Consider the following 361-residue polypeptide: Isocitrate dehydrogenase [NAD] subunit 1, mitochondrial (361 aa).

A mitochondrion-targeting transit peptide spans 1–12 (MLRQGIAAQKKS). Substrate contacts are provided by Arg-110, Arg-141, and Asp-229. Asp-229 lines the Mg(2+) pocket.

It belongs to the isocitrate and isopropylmalate dehydrogenases family. In terms of assembly, octamer of two non-identical subunits IDH1 and IDH2. Mg(2+) is required as a cofactor. It depends on Mn(2+) as a cofactor.

The protein localises to the mitochondrion. The enzyme catalyses D-threo-isocitrate + NAD(+) = 2-oxoglutarate + CO2 + NADH. Its function is as follows. Performs an essential role in the oxidative function of the citric acid cycle. The polypeptide is Isocitrate dehydrogenase [NAD] subunit 1, mitochondrial (IDH1) (Kluyveromyces lactis (strain ATCC 8585 / CBS 2359 / DSM 70799 / NBRC 1267 / NRRL Y-1140 / WM37) (Yeast)).